Consider the following 273-residue polypeptide: Putative pyruvate, phosphate dikinase regulatory protein (273 aa).

Gly153–Thr160 contacts ADP.

This sequence belongs to the pyruvate, phosphate/water dikinase regulatory protein family. PDRP subfamily.

The enzyme catalyses N(tele)-phospho-L-histidyl/L-threonyl-[pyruvate, phosphate dikinase] + ADP = N(tele)-phospho-L-histidyl/O-phospho-L-threonyl-[pyruvate, phosphate dikinase] + AMP + H(+). It catalyses the reaction N(tele)-phospho-L-histidyl/O-phospho-L-threonyl-[pyruvate, phosphate dikinase] + phosphate + H(+) = N(tele)-phospho-L-histidyl/L-threonyl-[pyruvate, phosphate dikinase] + diphosphate. Its function is as follows. Bifunctional serine/threonine kinase and phosphorylase involved in the regulation of the pyruvate, phosphate dikinase (PPDK) by catalyzing its phosphorylation/dephosphorylation. In Sinorhizobium fredii (strain NBRC 101917 / NGR234), this protein is Putative pyruvate, phosphate dikinase regulatory protein.